A 306-amino-acid polypeptide reads, in one-letter code: Acetaldehyde dehydrogenase 2/3 (306 aa).

The Acyl-thioester intermediate role is filled by Cys-130. NAD(+) is bound by residues Ser-161–Asn-169 and Asn-272.

This sequence belongs to the acetaldehyde dehydrogenase family.

The catalysed reaction is acetaldehyde + NAD(+) + CoA = acetyl-CoA + NADH + H(+). The chain is Acetaldehyde dehydrogenase 2/3 (mhpF) from Azoarcus sp. (strain BH72).